The following is a 136-amino-acid chain: Nucleoside diphosphate kinase (136 aa).

The ATP site is built by Lys10, Phe58, Arg86, Thr92, Arg104, and Asn114. His117 (pros-phosphohistidine intermediate) is an active-site residue.

It belongs to the NDK family. In terms of assembly, homotetramer. It depends on Mg(2+) as a cofactor.

The protein resides in the cytoplasm. The catalysed reaction is a 2'-deoxyribonucleoside 5'-diphosphate + ATP = a 2'-deoxyribonucleoside 5'-triphosphate + ADP. It carries out the reaction a ribonucleoside 5'-diphosphate + ATP = a ribonucleoside 5'-triphosphate + ADP. Its function is as follows. Major role in the synthesis of nucleoside triphosphates other than ATP. The ATP gamma phosphate is transferred to the NDP beta phosphate via a ping-pong mechanism, using a phosphorylated active-site intermediate. The sequence is that of Nucleoside diphosphate kinase from Mycobacterium ulcerans (strain Agy99).